We begin with the raw amino-acid sequence, 153 residues long: E3 ubiquitin-protein ligase AIRP1 (153 aa).

The RING-type; atypical zinc finger occupies 104-145; that stretch reads CPICLEEYEIDNPKLLTKCGHDFHLACILAWMERSEACPVCD.

It localises to the cytoplasm. It is found in the cytosol. It catalyses the reaction S-ubiquitinyl-[E2 ubiquitin-conjugating enzyme]-L-cysteine + [acceptor protein]-L-lysine = [E2 ubiquitin-conjugating enzyme]-L-cysteine + N(6)-ubiquitinyl-[acceptor protein]-L-lysine.. In terms of biological role, possesses E3 ubiquitin-protein ligase activity in vitro when associated with the E2 enzyme UBC8 in vitro. Plays combinatory roles with AIRP2 in the positive regulation of the abscisic acid-mediated drought stress response. This Arabidopsis thaliana (Mouse-ear cress) protein is E3 ubiquitin-protein ligase AIRP1.